A 251-amino-acid chain; its full sequence is MTMLNGLRILDTLPLAALEVGKHWYWEIGNLKLHGQVFMASWVVIALLIIASLLATRNIQRVPSGMQNFMEYVLEFLRDLARTQLGEKHYRPWLPFIGTLFLFIFVSNWSGSLIPWRLIEIPEGELAAPTNDINTTVALALLTSLAYFYAGLSKKGLGYFANYVQPIPVLLPIKILEDFTKPLSLSFRLFGNILADELVVAVLVFLVPLFVPLPLMALGLFTSAIQALVFATLAGAYIHEAIESEEEEEHA.

The next 5 helical transmembrane spans lie at G35–A55, L94–I114, I133–S153, L198–L218, and G219–H239.

Belongs to the ATPase A chain family. In terms of assembly, F-type ATPases have 2 components, CF(1) - the catalytic core - and CF(0) - the membrane proton channel. CF(1) has five subunits: alpha(3), beta(3), gamma(1), delta(1), epsilon(1). CF(0) has four main subunits: a, b, b' and c.

The protein localises to the cellular thylakoid membrane. Key component of the proton channel; it plays a direct role in the translocation of protons across the membrane. The chain is ATP synthase subunit a 2 from Crocosphaera subtropica (strain ATCC 51142 / BH68) (Cyanothece sp. (strain ATCC 51142)).